The primary structure comprises 703 residues: Cycloartenol synthase (703 aa).

2 PFTB repeats span residues 59-103 (IKKA…QLPE) and 106-148 (QREI…RLLG). The active-site Proton donor is D435. PFTB repeat units follow at residues 461-503 (IADG…QNIM), 539-579 (IARG…VASG), 587-628 (IVKA…VNTG), and 645-686 (IERG…KNIF).

It belongs to the terpene cyclase/mutase family.

The catalysed reaction is (S)-2,3-epoxysqualene = cycloartenol. Its function is as follows. Converts oxidosqualene to cycloartenol (in vitro). The sequence is that of Cycloartenol synthase (cas1) from Dictyostelium discoideum (Social amoeba).